Here is a 163-residue protein sequence, read N- to C-terminus: Small ribosomal subunit protein bS18c (163 aa).

Disordered stretches follow at residues 1 to 52 (MYIS…IGPG) and 144 to 163 (NLRNSNQNLRNNNRNLSSDC). A compositionally biased stretch (basic residues) spans 7 to 48 (PFRKSKQPFRKSKQPFHKSKQPFRKFKQPFRKSKQPFRRRSR).

Belongs to the bacterial ribosomal protein bS18 family. As to quaternary structure, part of the 30S ribosomal subunit.

Its subcellular location is the plastid. It localises to the chloroplast. The sequence is that of Small ribosomal subunit protein bS18c from Saccharum hybrid (Sugarcane).